A 168-amino-acid polypeptide reads, in one-letter code: RNA pyrophosphohydrolase (168 aa).

The region spanning 8–160 (PYRTCVGIAL…KRPVYERVAK (153 aa)) is the Nudix hydrolase domain. The short motif at 47 to 68 (GGVDPGEDAWEAAKRELYEETS) is the Nudix box element.

Belongs to the Nudix hydrolase family. RppH subfamily. It depends on a divalent metal cation as a cofactor.

Functionally, accelerates the degradation of transcripts by removing pyrophosphate from the 5'-end of triphosphorylated RNA, leading to a more labile monophosphorylated state that can stimulate subsequent ribonuclease cleavage. In Bradyrhizobium sp. (strain ORS 278), this protein is RNA pyrophosphohydrolase.